The sequence spans 243 residues: UPF0246 protein MGAS10750_Spy1880 (243 aa).

The protein belongs to the UPF0246 family.

In Streptococcus pyogenes serotype M4 (strain MGAS10750), this protein is UPF0246 protein MGAS10750_Spy1880.